The sequence spans 146 residues: Regulator of ribonuclease activity B (146 aa).

The interval 110–146 (WGTYFEDPDGEEEEGDEFDQDDEDGPADRDEVPATRH) is disordered. Over residues 115-134 (EDPDGEEEEGDEFDQDDEDG) the composition is skewed to acidic residues. The span at 135–146 (PADRDEVPATRH) shows a compositional bias: basic and acidic residues.

Belongs to the RraB family. As to quaternary structure, interacts with the C-terminal region of Rne.

Its subcellular location is the cytoplasm. Globally modulates RNA abundance by binding to RNase E (Rne) and regulating its endonucleolytic activity. Can modulate Rne action in a substrate-dependent manner by altering the composition of the degradosome. The polypeptide is Regulator of ribonuclease activity B (Sodalis glossinidius (strain morsitans)).